Here is a 425-residue protein sequence, read N- to C-terminus: Glutamyl-tRNA reductase (425 aa).

Substrate contacts are provided by residues 47-50 (TCNR), S107, 112-114 (EDQ), and Q118. C48 functions as the Nucleophile in the catalytic mechanism. 187-192 (GAGHIA) is a binding site for NADP(+).

The protein belongs to the glutamyl-tRNA reductase family. In terms of assembly, homodimer.

It catalyses the reaction (S)-4-amino-5-oxopentanoate + tRNA(Glu) + NADP(+) = L-glutamyl-tRNA(Glu) + NADPH + H(+). Its pathway is porphyrin-containing compound metabolism; protoporphyrin-IX biosynthesis; 5-aminolevulinate from L-glutamyl-tRNA(Glu): step 1/2. The protein operates within porphyrin-containing compound metabolism; chlorophyll biosynthesis. Functionally, catalyzes the NADPH-dependent reduction of glutamyl-tRNA(Glu) to glutamate 1-semialdehyde (GSA). The polypeptide is Glutamyl-tRNA reductase (Roseiflexus sp. (strain RS-1)).